Here is a 252-residue protein sequence, read N- to C-terminus: MGSELIGRLAPRLGLAEPDMLRKAEEYLRLSRVKCVGLSARTTETSSAVMCLDLAASWMKCPLDRAYLIKLSGLNKETYQSCLKSFECLLGLNSNIGIRDLAVQFSCIEAVNMASKILKSYESSLPQTQQVDLDLSRPLFTSAALLSACKILKLKVDKNKMVATSGVKKAIFDRLCKQLEKIGQQVDREPGDVATPPRKRKKIVVEAPAKEMEKVEEMPHKPQKDEDLTQDYEEWKRKILENAASAQKATAE.

Residues 188-232 (REPGDVATPPRKRKKIVVEAPAKEMEKVEEMPHKPQKDEDLTQDY) form a disordered region. Threonine 195 bears the Phosphothreonine mark. A compositionally biased stretch (basic and acidic residues) spans 208-232 (PAKEMEKVEEMPHKPQKDEDLTQDY). Lysine 210 participates in a covalent cross-link: Glycyl lysine isopeptide (Lys-Gly) (interchain with G-Cter in SUMO2). A Phosphothreonine modification is found at threonine 229.

Belongs to the ORC6 family. As to quaternary structure, component of ORC, a complex composed of at least 6 subunits: ORC1, ORC2, ORC3, ORC4, ORC5 and ORC6. ORC is regulated in a cell-cycle dependent manner. It is sequentially assembled at the exit from anaphase of mitosis and disassembled as cells enter S phase. Interacts with DBF4.

It is found in the nucleus. Functionally, component of the origin recognition complex (ORC) that binds origins of replication. DNA-binding is ATP-dependent. The specific DNA sequences that define origins of replication have not been identified yet. ORC is required to assemble the pre-replication complex necessary to initiate DNA replication. Does not bind histone H3 and H4 trimethylation marks H3K9me3, H3K27me3 and H4K20me3. The polypeptide is Origin recognition complex subunit 6 (ORC6) (Homo sapiens (Human)).